A 1392-amino-acid polypeptide reads, in one-letter code: ENHANCER OF AG-4 protein 2 (1392 aa).

The region spanning 20 to 77 (LGDLVLAKVKGFPAWPAKISRPEDWDRAPDPKKYFVQFFGTEEIAFVAPPDIQAFTSE) is the PWWP domain. Polar residues predominate over residues 184 to 194 (ESKVKTTSPVS). Disordered regions lie at residues 184-354 (ESKV…STGT), 384-428 (KRQR…PAAQ), 575-613 (KKPQ…GERL), and 723-766 (QGHH…GGSL). Composition is skewed to basic and acidic residues over residues 196 to 215 (SLEH…DKGT), 239 to 258 (KEAG…DKSN), and 311 to 345 (LESE…KCEI). Polar residues predominate over residues 391 to 400 (EHATSPSFSG). Residues 401-417 (SRDKSGKGHLEQKDRSS) are compositionally biased toward basic and acidic residues. Composition is skewed to polar residues over residues 591 to 601 (KISSSQSQPAN) and 725 to 744 (HHQQ…SRNQ). The region spanning 771-912 (EAAISRDAFE…RYIDDIRASG (142 aa)) is the CID domain. 3 disordered regions span residues 957–986 (FFSS…AGER), 1014–1356 (LEME…NYQP), and 1369–1392 (PGHT…WRPA). Residues 1059–1129 (EDSPPLPQES…SPPPPPPPPS (71 aa)) are compositionally biased toward pro residues. A compositionally biased stretch (polar residues) spans 1157–1175 (LSHQTYPGSMQQDRSSIFT). Over residues 1215–1225 (SSREPSSFTSS) the composition is skewed to low complexity. 2 stretches are compositionally biased toward polar residues: residues 1240–1255 (EASS…TPLS) and 1265–1284 (APSS…QHSY). Over residues 1293–1306 (QRDDARRYRNEEPW) the composition is skewed to basic and acidic residues. The span at 1311-1320 (SGHSAENQNG) shows a compositional bias: polar residues.

As to expression, expressed in the inflorescence meristem, floral primordia, inflorescence stem, and floral pedicels. Also detected in the shoot apical meristem, stems, leaves, embryos, and roots.

Its subcellular location is the nucleus. Functionally, transcription factor that functions as a repressor of flowering by enhancing the expression of several genes that delay flowering including FLC, FLM/MAF1, MAF2 and SVP. Also acts in the floral homeotic AGAMOUS (AG) pathway, specifically by processing the AGAMOUS pre-mRNA. Functions in association with HUA1 and HEN4 in AG pre-mRNA processing. Involved in all three aspects of the AG functions, the specification of stamen and carpel identities, the control of floral determinacy, and the spatial restriction of AP1 expression. Acts as a transcription regulator that controls anthocyanin accumulation. The sequence is that of ENHANCER OF AG-4 protein 2 from Arabidopsis thaliana (Mouse-ear cress).